A 234-amino-acid polypeptide reads, in one-letter code: tRNA (guanine-N(1)-)-methyltransferase (234 aa).

S-adenosyl-L-methionine is bound by residues Gly-110 and 134-139 (IGDYVL).

It belongs to the RNA methyltransferase TrmD family. Homodimer.

The protein localises to the cytoplasm. It catalyses the reaction guanosine(37) in tRNA + S-adenosyl-L-methionine = N(1)-methylguanosine(37) in tRNA + S-adenosyl-L-homocysteine + H(+). Functionally, specifically methylates guanosine-37 in various tRNAs. The chain is tRNA (guanine-N(1)-)-methyltransferase from Tropheryma whipplei (strain Twist) (Whipple's bacillus).